The chain runs to 136 residues: Large ribosomal subunit protein uL16 (136 aa).

The protein belongs to the universal ribosomal protein uL16 family. Part of the 50S ribosomal subunit.

In terms of biological role, binds 23S rRNA and is also seen to make contacts with the A and possibly P site tRNAs. This chain is Large ribosomal subunit protein uL16, found in Serratia proteamaculans (strain 568).